Consider the following 263-residue polypeptide: Putative hydro-lyase Pden_0321 (263 aa).

The protein belongs to the D-glutamate cyclase family.

The protein is Putative hydro-lyase Pden_0321 of Paracoccus denitrificans (strain Pd 1222).